Consider the following 138-residue polypeptide: ATP synthase epsilon chain, chloroplastic (138 aa).

Belongs to the ATPase epsilon chain family. In terms of assembly, F-type ATPases have 2 components, CF(1) - the catalytic core - and CF(0) - the membrane proton channel. CF(1) has five subunits: alpha(3), beta(3), gamma(1), delta(1), epsilon(1). CF(0) has three main subunits: a, b and c.

The protein localises to the plastid. The protein resides in the chloroplast thylakoid membrane. In terms of biological role, produces ATP from ADP in the presence of a proton gradient across the membrane. The protein is ATP synthase epsilon chain, chloroplastic of Staurastrum punctulatum (Green alga).